A 223-amino-acid chain; its full sequence is Ribose-5-phosphate isomerase A (223 aa).

Substrate contacts are provided by residues 26-29 (TGST), 82-85 (DGAD), and 95-98 (KGGG). Glu104 functions as the Proton acceptor in the catalytic mechanism. Lys122 contacts substrate.

This sequence belongs to the ribose 5-phosphate isomerase family. Homodimer.

The enzyme catalyses aldehydo-D-ribose 5-phosphate = D-ribulose 5-phosphate. The protein operates within carbohydrate degradation; pentose phosphate pathway; D-ribose 5-phosphate from D-ribulose 5-phosphate (non-oxidative stage): step 1/1. Its function is as follows. Catalyzes the reversible conversion of ribose-5-phosphate to ribulose 5-phosphate. The protein is Ribose-5-phosphate isomerase A of Streptococcus agalactiae serotype V (strain ATCC BAA-611 / 2603 V/R).